The chain runs to 203 residues: Mpv17-like protein (203 aa).

Residues 1–12 lie on the Cytoplasmic side of the membrane; that stretch reads MRILIQFTKRHP. A helical membrane pass occupies residues 13-30; that stretch reads WLTNVTIYGSLFASADIV. At 31 to 49 the chain is on the lumenal side; that stretch reads QQKLSKSPTEPIDFKQTAK. Residues 50–69 form a helical membrane-spanning segment; sequence VGLVGFCFHANFNFFWLRFI. Topologically, residues 70 to 89 are cytoplasmic; sequence ERTFPGSAPLNVIRKVACDQ. The chain crosses the membrane as a helical span at residues 90–107; the sequence is LMAAPITISAFYTGLSLL. Over 108 to 143 the chain is Lumenal; the sequence is DGERDVFKNLKEKFWPTYKTGVMCWTVFQTINFSVI. A helical membrane pass occupies residues 144 to 166; it reads PPFVRTAYIGVCAFLWTTFLCYI. The Cytoplasmic portion of the chain corresponds to 167-203; sequence RNRDINEVTTRLLHAVPNIRGKMAFPQDQDDNKPADK.

Belongs to the peroxisomal membrane protein PXMP2/4 family.

It localises to the peroxisome membrane. In terms of biological role, participates in reactive oxygen species metabolism by up- or down-regulation of the genes of antioxidant enzymes. Protective against the mitochondrial apoptotic cascade. The polypeptide is Mpv17-like protein (mpv17l) (Xenopus laevis (African clawed frog)).